The chain runs to 324 residues: MAKQIKKIAVLTSGGDAPGMNAAIRGVVRAALNEGLEVYGVQDGYYGLYTDRVIPLDRRSVSETINRGGTFLGSARFPQFKDPDVRKKSVETLKKYDIDALVVIGGDGSYMGAKLITEEFGYPCIGIPGTIDNDIVGTDYTIGYQTALETAVEAIDRLRDTSTSHQRISIVEIMGRHCGDLTISAALASGCEYIIVPEKGLDKESLMRNIEDGFNKGKRHAIIAITELMTDVQALAKEIEDRFGHETRATVLGHIQRGGAPCPFDRILASRMGVYAVDLLLQGHGGRCIGIKNENLVHHDIIDAINNMRRPFKEELFEAARKLF.

Position 15 (G15) interacts with ATP. Position 25-29 (25-29 (RGVVR)) interacts with ADP. ATP contacts are provided by residues 76-77 (RF) and 106-109 (GDGS). D107 is a Mg(2+) binding site. 130-132 (TID) contributes to the substrate binding site. Residue D132 is the Proton acceptor of the active site. An ADP-binding site is contributed by R159. Residues R167 and 174 to 176 (MGR) contribute to the substrate site. ADP is bound by residues 190-192 (GCE), K216, and 218-220 (KRH). Substrate is bound by residues E227, R248, and 254 to 257 (HIQR).

Belongs to the phosphofructokinase type A (PFKA) family. ATP-dependent PFK group I subfamily. Prokaryotic clade 'B1' sub-subfamily. Homotetramer. Mg(2+) serves as cofactor.

Its subcellular location is the cytoplasm. It carries out the reaction beta-D-fructose 6-phosphate + ATP = beta-D-fructose 1,6-bisphosphate + ADP + H(+). The protein operates within carbohydrate degradation; glycolysis; D-glyceraldehyde 3-phosphate and glycerone phosphate from D-glucose: step 3/4. Allosterically activated by ADP and other diphosphonucleosides, and allosterically inhibited by phosphoenolpyruvate. Functionally, catalyzes the phosphorylation of D-fructose 6-phosphate to fructose 1,6-bisphosphate by ATP, the first committing step of glycolysis. The sequence is that of ATP-dependent 6-phosphofructokinase from Actinobacillus pleuropneumoniae serotype 5b (strain L20).